Consider the following 320-residue polypeptide: Retron Ec86 reverse transcriptase (320 aa).

The region spanning 34–248 (VETLRLLIYT…SQRKVTGLVI (215 aa)) is the Reverse transcriptase domain. Residues Asp-119, Asp-197, and Asp-198 each contribute to the Mg(2+) site. The tract at residues 230 to 320 (KKTCISGPRS…GKNPLNKAKT (91 aa)) is necessary and required for recognition and binding of RNA.

The protein belongs to the bacterial reverse transcriptase family.

The enzyme catalyses DNA(n) + a 2'-deoxyribonucleoside 5'-triphosphate = DNA(n+1) + diphosphate. Functionally, reverse transcriptase (RT) component of antiviral defense system retron Ec86, composed of a non-coding RNA (ncRNA), a ribosyltransferase/DNA-binding protein and this RT. Expression of the 3-gene retron confers protection against bacteriophage T5. At multiplicity of infection (MOI) of 0.02 cultures grow normally when infected with T5 without collapsing, at MOI 2 cultures enter growth stasis. Responsible for synthesis of msDNA (a branched molecule with RNA linked by a 2',5'-phosphodiester bond to ssDNA). The retron transcript serves as primer (from a conserved internal G residue) and template for the reaction, and codes for the RT. Recognizes only its cognate RNA as a primer template. Overexpression of the ncRNA and RT (without the ribosyltransferase), which leads to increased levels of msDNA, is mutagenic in vivo. This may be due to a mismatch in the msDNA stem which binds and sequesters MutS and/or MutL. This chain is Retron Ec86 reverse transcriptase, found in Escherichia coli.